A 156-amino-acid chain; its full sequence is 6,7-dimethyl-8-ribityllumazine synthase (156 aa).

Residues Phe-22, 57–59, and 81–83 each bind 5-amino-6-(D-ribitylamino)uracil; these read AYE and TVI. (2S)-2-hydroxy-3-oxobutyl phosphate is bound at residue 86–87; the sequence is GT. His-89 acts as the Proton donor in catalysis. A 5-amino-6-(D-ribitylamino)uracil-binding site is contributed by Phe-114. Arg-128 contributes to the (2S)-2-hydroxy-3-oxobutyl phosphate binding site.

It belongs to the DMRL synthase family. In terms of assembly, forms an icosahedral capsid composed of 60 subunits, arranged as a dodecamer of pentamers.

It catalyses the reaction (2S)-2-hydroxy-3-oxobutyl phosphate + 5-amino-6-(D-ribitylamino)uracil = 6,7-dimethyl-8-(1-D-ribityl)lumazine + phosphate + 2 H2O + H(+). It participates in cofactor biosynthesis; riboflavin biosynthesis; riboflavin from 2-hydroxy-3-oxobutyl phosphate and 5-amino-6-(D-ribitylamino)uracil: step 1/2. Catalyzes the formation of 6,7-dimethyl-8-ribityllumazine by condensation of 5-amino-6-(D-ribitylamino)uracil with 3,4-dihydroxy-2-butanone 4-phosphate. This is the penultimate step in the biosynthesis of riboflavin. The chain is 6,7-dimethyl-8-ribityllumazine synthase from Serratia proteamaculans (strain 568).